Consider the following 489-residue polypeptide: MMYEKRSYTGYGHPSSHYDYPPPSGPPGSFYLADVPPQHFYQWRSPPGIVRILQGSVVILCLVIFACVASTLAWEYYGSGGLLGYGGGLGSYYNGYYGGYNGYYYGGLTNPRAANGFMIAMAVLCFLVTLGLVIAGLSKASGARSRRFYLLVAVLSGLLAFVMLIASIVYVVGVNPRAGLGASSGSLYYNQMLMLCNQMMSPVAGGIMNQYLYHYCMVDPQEAVAIVCGFLTVILLCVICYFAQKTRHKIWKYGKPNIFWDKPLATAEGPNVEEWVKNVSGDVGTQDETATLAYSEKPISPLTSAFLPAQENGYGHSTPSSPSVPPPEGPSPPEEKDKGSVSRPPARRGHRQRPRPTGLEESQYETDYTTAAESSGEQNRDDWASLYPPIISDAIRQTYKAEFNNDLQRYKALCAEMDDIGTQLRQLSHELDCLPEGSLRYQGVAEEYNRLKDLKRSPEYQSKKLETQSLRDKLCHIKRMVGGYDQSRS.

Residues 1–51 (MMYEKRSYTGYGHPSSHYDYPPPSGPPGSFYLADVPPQHFYQWRSPPGIVR) are Cytoplasmic-facing. The MARVEL domain occupies 45–248 (SPPGIVRILQ…ICYFAQKTRH (204 aa)). The helical transmembrane segment at 52–74 (ILQGSVVILCLVIFACVASTLAW) threads the bilayer. Residues 75 to 112 (EYYGSGGLLGYGGGLGSYYNGYYGGYNGYYYGGLTNPR) are Extracellular-facing. Residues 113–137 (AANGFMIAMAVLCFLVTLGLVIAGL) traverse the membrane as a helical segment. The Cytoplasmic segment spans residues 138–147 (SKASGARSRR). The chain crosses the membrane as a helical span at residues 148–172 (FYLLVAVLSGLLAFVMLIASIVYVV). Over 173–222 (GVNPRAGLGASSGSLYYNQMLMLCNQMMSPVAGGIMNQYLYHYCMVDPQE) the chain is Extracellular. Cysteine 196 and cysteine 216 are joined by a disulfide. The helical transmembrane segment at 223-244 (AVAIVCGFLTVILLCVICYFAQ) threads the bilayer. Over 245–489 (KTRHKIWKYG…MVGGYDQSRS (245 aa)) the chain is Cytoplasmic. Serine 280 carries the phosphoserine modification. At threonine 285 the chain carries Phosphothreonine. Serine 300 carries the phosphoserine modification. The interval 308-382 (PAQENGYGHS…ESSGEQNRDD (75 aa)) is disordered. Residues 322–332 (PSVPPPEGPSP) show a composition bias toward pro residues. Residues 345-354 (PARRGHRQRP) are compositionally biased toward basic residues. Residues tyrosine 364 and tyrosine 368 each carry the phosphotyrosine modification. Residues 365 to 377 (ETDYTTAAESSGE) show a composition bias toward polar residues. A phosphothreonine; by PKC/PRKCH mark is found at threonine 369 and threonine 370. At serine 374 the chain carries Phosphoserine. In terms of domain architecture, OCEL spans 381-489 (DDWASLYPPI…MVGGYDQSRS (109 aa)). A coiled-coil region spans residues 407 to 434 (LQRYKALCAEMDDIGTQLRQLSHELDCL). Serine 457 carries the post-translational modification Phosphoserine.

It belongs to the ELL/occludin family. As to quaternary structure, interacts with TJP1/ZO1. Interacts with VAPA. Interacts with CLDN1, CLDN6, CLDN9, CLDN11, CLDN12 and CLDN17. Interacts with PLSCR1. Interacts with LSR, ILDR1 and ILDR2. Interacts with TJP2/ZO2. Post-translationally, dephosphorylated by PTPRJ. As to expression, localized at tight junctions of both epithelial and endothelial cells.

The protein localises to the cell membrane. The protein resides in the cell junction. It is found in the tight junction. May play a role in the formation and regulation of the tight junction (TJ) paracellular permeability barrier. This chain is Occludin (OCLN), found in Potorous tridactylus (Potoroo).